We begin with the raw amino-acid sequence, 140 residues long: Lysozyme c-1 (140 aa).

An N-terminal signal peptide occupies residues 1-20 (MKVFSTVLLAIVACCAVAEA). One can recognise a C-type lysozyme domain in the interval 21 to 140 (KTFGKCELAK…KKLPNVSSCF (120 aa)). Disulfide bonds link Cys-26–Cys-139, Cys-47–Cys-128, Cys-81–Cys-94, and Cys-90–Cys-108. Catalysis depends on residues Glu-52 and Asp-69.

It belongs to the glycosyl hydrolase 22 family. As to expression, expressed in salivary glands and Malpighian tubules.

The enzyme catalyses Hydrolysis of (1-&gt;4)-beta-linkages between N-acetylmuramic acid and N-acetyl-D-glucosamine residues in a peptidoglycan and between N-acetyl-D-glucosamine residues in chitodextrins.. Functionally, lysozymes have primarily a bacteriolytic function; those in tissues and body fluids are associated with the monocyte-macrophage system and enhance the activity of immunoagents. The sequence is that of Lysozyme c-1 from Anopheles gambiae (African malaria mosquito).